Here is a 247-residue protein sequence, read N- to C-terminus: STING ER exit protein (247 aa).

Ser127 bears the Phosphoserine mark. Residues 195–216 adopt a coiled-coil conformation; it reads EAREIADSYANNARIIEKQLQR. A disordered region spans residues 215–247; that stretch reads QRKGGKLSDVGIKTKTEDAPPPQKKQRGTLLER.

This sequence belongs to the STEEP1 family.

Functionally, molecular adapter that stimulates membrane curvature formation and subsequent endoplasmic reticulum exit site (ERES) establishment by recruiting PI3K complex I, leading to COPII vesicle-mediated transport. The chain is STING ER exit protein from Drosophila melanogaster (Fruit fly).